The chain runs to 177 residues: Putative zinc finger protein 826 (177 aa).

A C2H2-type 1; degenerate zinc finger spans residues 99 to 114; the sequence is KTFTWSSSPHKHRRTH. The C2H2-type 2; degenerate zinc finger occupies 120 to 142; the sequence is YKCEECGKAFTASSTLSEYKTIH. The C2H2-type 3 zinc finger occupies 148 to 170; sequence CKCEECGKAFNWSSDFNKHKRIH.

The protein localises to the nucleus. May be involved in transcriptional regulation. This is Putative zinc finger protein 826 (ZNF826P) from Homo sapiens (Human).